A 125-amino-acid chain; its full sequence is Aspartate 1-decarboxylase (125 aa).

The Schiff-base intermediate with substrate; via pyruvic acid role is filled by serine 25. Serine 25 is subject to Pyruvic acid (Ser). A substrate-binding site is contributed by threonine 57. Residue tyrosine 58 is the Proton donor of the active site. A substrate-binding site is contributed by 71–73 (GAA).

The protein belongs to the PanD family. As to quaternary structure, heterooctamer of four alpha and four beta subunits. Requires pyruvate as cofactor. Post-translationally, is synthesized initially as an inactive proenzyme, which is activated by self-cleavage at a specific serine bond to produce a beta-subunit with a hydroxyl group at its C-terminus and an alpha-subunit with a pyruvoyl group at its N-terminus.

The protein localises to the cytoplasm. It catalyses the reaction L-aspartate + H(+) = beta-alanine + CO2. Its pathway is cofactor biosynthesis; (R)-pantothenate biosynthesis; beta-alanine from L-aspartate: step 1/1. In terms of biological role, catalyzes the pyruvoyl-dependent decarboxylation of aspartate to produce beta-alanine. The sequence is that of Aspartate 1-decarboxylase from Hydrogenobaculum sp. (strain Y04AAS1).